Here is a 145-residue protein sequence, read N- to C-terminus: Small ribosomal subunit protein bS6 (145 aa).

Over residues 113–132 the composition is skewed to basic and acidic residues; it reads ENMKKNERKAPKEPVKKDEE. A disordered region spans residues 113 to 145; sequence ENMKKNERKAPKEPVKKDEEENKESEEEITSEE. Acidic residues predominate over residues 133 to 145; that stretch reads ENKESEEEITSEE.

The protein belongs to the bacterial ribosomal protein bS6 family.

Binds together with bS18 to 16S ribosomal RNA. The sequence is that of Small ribosomal subunit protein bS6 from Campylobacter hominis (strain ATCC BAA-381 / DSM 21671 / CCUG 45161 / LMG 19568 / NCTC 13146 / CH001A).